A 218-amino-acid chain; its full sequence is ATP-dependent dethiobiotin synthetase BioD (218 aa).

10–15 (NAGKTT) contacts ATP. Thr14 provides a ligand contact to Mg(2+). Lys35 is an active-site residue. Thr39 is a binding site for substrate. Glu116 provides a ligand contact to Mg(2+). ATP contacts are provided by residues 116–119 (EGAG) and 176–177 (LR).

The protein belongs to the dethiobiotin synthetase family. As to quaternary structure, homodimer. The cofactor is Mg(2+).

The protein resides in the cytoplasm. It carries out the reaction (7R,8S)-7,8-diammoniononanoate + CO2 + ATP = (4R,5S)-dethiobiotin + ADP + phosphate + 3 H(+). The protein operates within cofactor biosynthesis; biotin biosynthesis; biotin from 7,8-diaminononanoate: step 1/2. In terms of biological role, catalyzes a mechanistically unusual reaction, the ATP-dependent insertion of CO2 between the N7 and N8 nitrogen atoms of 7,8-diaminopelargonic acid (DAPA, also called 7,8-diammoniononanoate) to form a ureido ring. The sequence is that of ATP-dependent dethiobiotin synthetase BioD from Helicobacter pylori (strain J99 / ATCC 700824) (Campylobacter pylori J99).